The sequence spans 295 residues: Large ribosomal subunit protein uL18 (295 aa).

The segment covering 251 to 261 (PTPKKKTDFAG) has biased composition (basic and acidic residues). Residues 251–295 (PTPKKKTDFAGKTKRWNRKKMTFSQRRDRVKQKKASFLRAKQQEG) are disordered. Over residues 262–271 (KTKRWNRKKM) the composition is skewed to basic residues.

Belongs to the universal ribosomal protein uL18 family. As to quaternary structure, component of the large ribosomal subunit (LSU).

The protein resides in the cytoplasm. It is found in the nucleus. Its function is as follows. Component of the ribosome, a large ribonucleoprotein complex responsible for the synthesis of proteins in the cell. The small ribosomal subunit (SSU) binds messenger RNAs (mRNAs) and translates the encoded message by selecting cognate aminoacyl-transfer RNA (tRNA) molecules. The large subunit (LSU) contains the ribosomal catalytic site termed the peptidyl transferase center (PTC), which catalyzes the formation of peptide bonds, thereby polymerizing the amino acids delivered by tRNAs into a polypeptide chain. The nascent polypeptides leave the ribosome through a tunnel in the LSU and interact with protein factors that function in enzymatic processing, targeting, and the membrane insertion of nascent chains at the exit of the ribosomal tunnel. This chain is Large ribosomal subunit protein uL18 (RPL5), found in Styela clava (Sea squirt).